Reading from the N-terminus, the 384-residue chain is MSKRRVVVGMSGGVDSSVTAWLLKEQGYDVVGLFMKNWEDDDDGEYCSTRQDWIDVVSVADLIGIDVEAVNFAAEYKDRVFAEFLREYSAGRTPNPDVLCNAEIKFKAFLDHAMSLDAEMIATGHYARVRERDGRFELLKAFDHTKDQSYFLHRLNQAQLSKTMFPLGEMPKTKVREIAAQIGLPNAKKKDSTGICFIGERPFRDFLNRYLPTKPGPMKTPDGKRVGEHIGLAFYTFGQRKGIGLGGSKDGSGEPWFVAAKDIPSNTLYVVQGHDHPWLLSHELVAGNVSWVAGEPPADGFACGAKTRYRQADAACRFGAAAAGPAGEARFTLAFDDAQWAVTPGQSAVLYDGEICLGGGIIEHAASGRDAAAAAPAAALVEAR.

ATP contacts are provided by residues 9 to 16 (GMSGGVDS) and methionine 35. Residues 95 to 97 (NPD) form an interaction with target base in tRNA region. Cysteine 100 functions as the Nucleophile in the catalytic mechanism. Cysteines 100 and 196 form a disulfide. ATP is bound at residue glycine 124. The tract at residues 146–148 (KDQ) is interaction with tRNA. The active-site Cysteine persulfide intermediate is cysteine 196. Residues 308 to 309 (RY) are interaction with tRNA.

The protein belongs to the MnmA/TRMU family.

The protein resides in the cytoplasm. It catalyses the reaction S-sulfanyl-L-cysteinyl-[protein] + uridine(34) in tRNA + AH2 + ATP = 2-thiouridine(34) in tRNA + L-cysteinyl-[protein] + A + AMP + diphosphate + H(+). In terms of biological role, catalyzes the 2-thiolation of uridine at the wobble position (U34) of tRNA, leading to the formation of s(2)U34. The chain is tRNA-specific 2-thiouridylase MnmA from Burkholderia vietnamiensis (strain G4 / LMG 22486) (Burkholderia cepacia (strain R1808)).